The following is a 214-amino-acid chain: Thiamine-phosphate synthase (214 aa).

4-amino-2-methyl-5-(diphosphooxymethyl)pyrimidine-binding positions include 40 to 44 (QLREK) and asparagine 72. Mg(2+) contacts are provided by aspartate 73 and aspartate 92. Serine 110 provides a ligand contact to 4-amino-2-methyl-5-(diphosphooxymethyl)pyrimidine. 137–139 (SPT) serves as a coordination point for 2-[(2R,5Z)-2-carboxy-4-methylthiazol-5(2H)-ylidene]ethyl phosphate. Lysine 140 is a 4-amino-2-methyl-5-(diphosphooxymethyl)pyrimidine binding site. 2-[(2R,5Z)-2-carboxy-4-methylthiazol-5(2H)-ylidene]ethyl phosphate is bound by residues glycine 167 and 185–186 (IS).

The protein belongs to the thiamine-phosphate synthase family. The cofactor is Mg(2+).

The catalysed reaction is 2-[(2R,5Z)-2-carboxy-4-methylthiazol-5(2H)-ylidene]ethyl phosphate + 4-amino-2-methyl-5-(diphosphooxymethyl)pyrimidine + 2 H(+) = thiamine phosphate + CO2 + diphosphate. It catalyses the reaction 2-(2-carboxy-4-methylthiazol-5-yl)ethyl phosphate + 4-amino-2-methyl-5-(diphosphooxymethyl)pyrimidine + 2 H(+) = thiamine phosphate + CO2 + diphosphate. It carries out the reaction 4-methyl-5-(2-phosphooxyethyl)-thiazole + 4-amino-2-methyl-5-(diphosphooxymethyl)pyrimidine + H(+) = thiamine phosphate + diphosphate. It participates in cofactor biosynthesis; thiamine diphosphate biosynthesis; thiamine phosphate from 4-amino-2-methyl-5-diphosphomethylpyrimidine and 4-methyl-5-(2-phosphoethyl)-thiazole: step 1/1. Its function is as follows. Condenses 4-methyl-5-(beta-hydroxyethyl)thiazole monophosphate (THZ-P) and 2-methyl-4-amino-5-hydroxymethyl pyrimidine pyrophosphate (HMP-PP) to form thiamine monophosphate (TMP). This Wolinella succinogenes (strain ATCC 29543 / DSM 1740 / CCUG 13145 / JCM 31913 / LMG 7466 / NCTC 11488 / FDC 602W) (Vibrio succinogenes) protein is Thiamine-phosphate synthase.